Consider the following 275-residue polypeptide: Methylglyoxal reductase DkgA (275 aa).

Y51 serves as the catalytic Proton donor. H107 lines the substrate pocket. Position 187 to 241 (187 to 241) interacts with NADP(+); that stretch reads SPLAQGGKGVFDQKVIRDLADKYGKTPAQIVIRWHLDSGLVVIPKSVTPSRIAEN.

This sequence belongs to the aldo/keto reductase family. Monomer.

Its subcellular location is the cytoplasm. The catalysed reaction is hydroxyacetone + NADP(+) = methylglyoxal + NADPH + H(+). It carries out the reaction a primary alcohol + NADP(+) = an aldehyde + NADPH + H(+). The enzyme catalyses 2-dehydro-L-idonate + NADP(+) = 2,5-didehydro-D-gluconate + NADPH + H(+). Functionally, aldo-keto reductase that significantly contributes to cellular methylglyoxal detoxification by catalyzing the NADPH-dependent conversion of methylglyoxal to acetol. It also exhibits fairly high activity with glyoxal. Shows broad specificity and can use aromatic aldehydes such as 4-nitrobenzaldehyde, 3-nitrobenzaldehyde and benzaldehyde, and phenylglyoxal. Shows beta-keto ester reductase activity toward ethyl acetoacetate and a variety of 2-substituted derivatives. Also catalyzes the reduction of 2,5-diketo-D-gluconic acid (25DKG) to 2-keto-L-gulonic acid (2KLG) and could be involved in ketogluconate metabolism. However, the specific activity of the enzyme toward 2,5-diketo-D-gluconate was reported to be almost 400-fold lower than its activity toward methylglyoxal. Can catalyze in vitro the NADPH-dependent reduction of furfural, a natural product of lignocellulosic decomposition, to the less toxic product, furfuryl alcohol. However, it is unlikely that furfural is a physiological substrate. This is Methylglyoxal reductase DkgA from Escherichia coli (strain K12).